Reading from the N-terminus, the 440-residue chain is Trigger factor (440 aa).

Positions 163–248 (GDTVNIDFDG…INEIKYKNVP (86 aa)) constitute a PPIase FKBP-type domain.

Belongs to the FKBP-type PPIase family. Tig subfamily.

It localises to the cytoplasm. The catalysed reaction is [protein]-peptidylproline (omega=180) = [protein]-peptidylproline (omega=0). Functionally, involved in protein export. Acts as a chaperone by maintaining the newly synthesized protein in an open conformation. Functions as a peptidyl-prolyl cis-trans isomerase. This chain is Trigger factor, found in Staphylococcus carnosus (strain TM300).